The following is a 469-amino-acid chain: Probable ribonuclease FAU-1 (469 aa).

It belongs to the FAU-1 family.

In terms of biological role, probable RNase involved in rRNA stability through maturation and/or degradation of precursor rRNAs. Binds to RNA in loop regions with AU-rich sequences. This Pyrococcus abyssi (strain GE5 / Orsay) protein is Probable ribonuclease FAU-1.